The sequence spans 291 residues: Tyrosine recombinase XerA (291 aa).

The Core-binding (CB) domain maps to 9–102 (PESGDLYNAF…AVRRFLKWIN (94 aa)). A Tyr recombinase domain is found at 115–279 (KEVKALDEIQ…VLDDLRNEYL (165 aa)). Catalysis depends on residues R150, K175, H231, R234, and H257. Y266 functions as the O-(3'-phospho-DNA)-tyrosine intermediate in the catalytic mechanism.

The protein belongs to the 'phage' integrase family. XerA subfamily.

The protein resides in the cytoplasm. Site-specific tyrosine recombinase, which acts by catalyzing the cutting and rejoining of the recombining DNA molecules. Probably involved in the resolution of chromosome dimers. Binds to the dif site. In Saccharolobus solfataricus (strain ATCC 35092 / DSM 1617 / JCM 11322 / P2) (Sulfolobus solfataricus), this protein is Tyrosine recombinase XerA.